A 132-amino-acid chain; its full sequence is Holo-[acyl-carrier-protein] synthase (132 aa).

Mg(2+) is bound by residues D8 and E64.

It belongs to the P-Pant transferase superfamily. AcpS family. Requires Mg(2+) as cofactor.

The protein resides in the cytoplasm. The catalysed reaction is apo-[ACP] + CoA = holo-[ACP] + adenosine 3',5'-bisphosphate + H(+). In terms of biological role, transfers the 4'-phosphopantetheine moiety from coenzyme A to a Ser of acyl-carrier-protein. This Shewanella woodyi (strain ATCC 51908 / MS32) protein is Holo-[acyl-carrier-protein] synthase.